The chain runs to 408 residues: L-lactate oxidase (408 aa).

The FMN hydroxy acid dehydrogenase domain maps to 14-370 (NEAIKMVNVD…KHADIRQINY (357 aa)). Tyrosine 40 contacts pyruvate. Residues 93–95 (PIA), serine 122, and glutamine 144 each bind FMN. Tyrosine 146 provides a ligand contact to pyruvate. Threonine 172 contributes to the FMN binding site. Arginine 181 contacts pyruvate. Lysine 241 and serine 263 together coordinate FMN. Positions 265 and 268 each coordinate pyruvate. The Proton acceptor role is filled by histidine 265. Residues 296–300 (DSGVR) and arginine 320 contribute to the FMN site.

It belongs to the FMN-dependent alpha-hydroxy acid dehydrogenase family. As to quaternary structure, homotetramer. FMN serves as cofactor.

The catalysed reaction is a (2S)-2-hydroxycarboxylate + O2 = a 2-oxocarboxylate + H2O2. It catalyses the reaction (S)-lactate + O2 = pyruvate + H2O2. The enzyme catalyses 2-hydroxyoctanoate + O2 = 2-oxooctanoate + H2O2. It carries out the reaction glycolate + O2 = glyoxylate + H2O2. The catalysed reaction is mandelate + O2 = phenylglyoxylate + H2O2. It catalyses the reaction 2-hydroxyoctadecanoate + O2 = 2-oxooctadecanoate + H2O2. Oxidase that catalyzes the oxidation of a broad range of 2-hydroxyacids in vitro, such as (S)-lactate, 2-hydroxyoctanoate, and to a lesser extent glycolate, mandelate and 2-hydroxyoctadecanoate, to the corresponding 2-oxoacids, with a reduction of O2 to H2O2. May be involved in the utilization of L-lactate as an energy source for growth. This Lactobacillus jensenii protein is L-lactate oxidase.